The primary structure comprises 144 residues: uncharacterized protein (144 aa).

The segment at 1 to 24 (MGKVIQFPFGEEPEKKEEKELKTE) is disordered. Positions 12–24 (EPEKKEEKELKTE) are enriched in basic and acidic residues.

This is an uncharacterized protein from Aquifex aeolicus (strain VF5).